The primary structure comprises 183 residues: Segregation and condensation protein B (183 aa).

The protein belongs to the ScpB family. In terms of assembly, homodimer. Homodimerization may be required to stabilize the binding of ScpA to the Smc head domains. Component of a cohesin-like complex composed of ScpA, ScpB and the Smc homodimer, in which ScpA and ScpB bind to the head domain of Smc. The presence of the three proteins is required for the association of the complex with DNA.

It is found in the cytoplasm. Participates in chromosomal partition during cell division. May act via the formation of a condensin-like complex containing Smc and ScpA that pull DNA away from mid-cell into both cell halves. The polypeptide is Segregation and condensation protein B (Streptococcus pyogenes serotype M12 (strain MGAS2096)).